The primary structure comprises 867 residues: Nitrate reductase [NADPH] (867 aa).

A disordered region spans residues 38-58 (DIPLPPPSKEPTEVLSIDKPT). Cys-152 contacts Mo-molybdopterin. The Cytochrome b5 heme-binding domain maps to 514–589 (NRIIDLQEFK…MPDYHIGTMD (76 aa)). Heme-binding residues include His-549 and His-572. The FAD-binding FR-type domain maps to 615-726 (KSWTKATLVK…KGPTGRFEYL (112 aa)). FAD-binding positions include 669–672 (RSYT), 686–690 (LVKIY), Phe-691, 700–702 (KMT), and Thr-753. NADP(+) is bound at residue 837–846 (MVLICGPEAM).

Belongs to the nitrate reductase family. Homodimer. The cofactor is FAD. It depends on heme as a cofactor. Requires Mo-molybdopterin as cofactor.

The catalysed reaction is nitrite + NADP(+) + H2O = nitrate + NADPH + H(+). Nitrate reductase is a key enzyme involved in the first step of nitrate assimilation in plants, fungi and bacteria. The chain is Nitrate reductase [NADPH] (niaD) from Aspergillus niger.